We begin with the raw amino-acid sequence, 229 residues long: Ferric nitrobindin-like protein (229 aa).

Residues 1-54 (MSENSTPNNPVVPGAGADGPSLSDSASISGSDAVNLAAEQSKSTAHRNIPGLGD) form a disordered region. The segment covering 18–33 (DGPSLSDSASISGSDA) has biased composition (low complexity). The short motif at 82–88 (GVWRGEG) is the GXWXGXG element.

This sequence belongs to the nitrobindin family.

The polypeptide is Ferric nitrobindin-like protein (Corynebacterium glutamicum (strain R)).